Here is a 101-residue protein sequence, read N- to C-terminus: ATP synthase subunit c (101 aa).

Helical transmembrane passes span 31–51 (AFAYLGAGLAMIGVIGVGAGQ) and 81–101 (AISETSSIYALLVALILIFVG).

It belongs to the ATPase C chain family. In terms of assembly, F-type ATPases have 2 components, F(1) - the catalytic core - and F(0) - the membrane proton channel. F(1) has five subunits: alpha(3), beta(3), gamma(1), delta(1), epsilon(1). F(0) has three main subunits: a(1), b(2) and c(10-14). The alpha and beta chains form an alternating ring which encloses part of the gamma chain. F(1) is attached to F(0) by a central stalk formed by the gamma and epsilon chains, while a peripheral stalk is formed by the delta and b chains.

The protein localises to the cell membrane. Functionally, f(1)F(0) ATP synthase produces ATP from ADP in the presence of a proton or sodium gradient. F-type ATPases consist of two structural domains, F(1) containing the extramembraneous catalytic core and F(0) containing the membrane proton channel, linked together by a central stalk and a peripheral stalk. During catalysis, ATP synthesis in the catalytic domain of F(1) is coupled via a rotary mechanism of the central stalk subunits to proton translocation. Its function is as follows. Key component of the F(0) channel; it plays a direct role in translocation across the membrane. A homomeric c-ring of between 10-14 subunits forms the central stalk rotor element with the F(1) delta and epsilon subunits. The polypeptide is ATP synthase subunit c (Mesomycoplasma hyopneumoniae (strain 232) (Mycoplasma hyopneumoniae)).